A 468-amino-acid chain; its full sequence is Argininosuccinate lyase (468 aa).

It belongs to the lyase 1 family. Argininosuccinate lyase subfamily.

Its subcellular location is the cytoplasm. The catalysed reaction is 2-(N(omega)-L-arginino)succinate = fumarate + L-arginine. It participates in amino-acid biosynthesis; L-arginine biosynthesis; L-arginine from L-ornithine and carbamoyl phosphate: step 3/3. The polypeptide is Argininosuccinate lyase (Gloeobacter violaceus (strain ATCC 29082 / PCC 7421)).